The following is a 1075-amino-acid chain: Carbamoyl phosphate synthase large chain (1075 aa).

Residues 2 to 403 (PKRTDIKSIL…SLQKALRGLE (402 aa)) are carboxyphosphate synthetic domain. ATP contacts are provided by Arg129, Arg169, Gly175, Gly176, Glu208, Leu210, Glu215, Gly241, Ile242, His243, Gln285, and Glu299. Positions 133-328 (DIAMKKIGLD…IAKVAAKLAV (196 aa)) constitute an ATP-grasp 1 domain. Residues Gln285, Glu299, and Asn301 each coordinate Mg(2+). Mn(2+) contacts are provided by Gln285, Glu299, and Asn301. An oligomerization domain region spans residues 404–553 (VGATGFDPKV…YSTYEDECEA (150 aa)). The segment at 554–936 (NPSIDRDKIM…AFAKAQLGSN (383 aa)) is carbamoyl phosphate synthetic domain. Residues 679–870 (QHAVDRLKLK…LAKVAARVMA (192 aa)) form the ATP-grasp 2 domain. Arg715, Arg754, Leu756, Glu761, Gly786, Val787, His788, Ser789, Gln829, and Glu841 together coordinate ATP. Mg(2+)-binding residues include Gln829, Glu841, and Asn843. Residues Gln829, Glu841, and Asn843 each coordinate Mn(2+). Residues 937 to 1075 (STMKKQGRAL…QEMHAQIKKS (139 aa)) form the MGS-like domain. The tract at residues 937-1075 (STMKKQGRAL…QEMHAQIKKS (139 aa)) is allosteric domain.

It belongs to the CarB family. Composed of two chains; the small (or glutamine) chain promotes the hydrolysis of glutamine to ammonia, which is used by the large (or ammonia) chain to synthesize carbamoyl phosphate. Tetramer of heterodimers (alpha,beta)4. Mg(2+) is required as a cofactor. It depends on Mn(2+) as a cofactor.

It catalyses the reaction hydrogencarbonate + L-glutamine + 2 ATP + H2O = carbamoyl phosphate + L-glutamate + 2 ADP + phosphate + 2 H(+). It carries out the reaction hydrogencarbonate + NH4(+) + 2 ATP = carbamoyl phosphate + 2 ADP + phosphate + 2 H(+). It participates in amino-acid biosynthesis; L-arginine biosynthesis; carbamoyl phosphate from bicarbonate: step 1/1. The protein operates within pyrimidine metabolism; UMP biosynthesis via de novo pathway; (S)-dihydroorotate from bicarbonate: step 1/3. Large subunit of the glutamine-dependent carbamoyl phosphate synthetase (CPSase). CPSase catalyzes the formation of carbamoyl phosphate from the ammonia moiety of glutamine, carbonate, and phosphate donated by ATP, constituting the first step of 2 biosynthetic pathways, one leading to arginine and/or urea and the other to pyrimidine nucleotides. The large subunit (synthetase) binds the substrates ammonia (free or transferred from glutamine from the small subunit), hydrogencarbonate and ATP and carries out an ATP-coupled ligase reaction, activating hydrogencarbonate by forming carboxy phosphate which reacts with ammonia to form carbamoyl phosphate. In Salmonella typhimurium (strain LT2 / SGSC1412 / ATCC 700720), this protein is Carbamoyl phosphate synthase large chain.